A 419-amino-acid polypeptide reads, in one-letter code: MGMTIAEKILAAHAGQEEASPGDLINAKVDIALGNDITAPIAIKLFRQSGAAKVFDKDRVVLVPDHFTPTKDINSAMQVKMVRDFAREQELSHWYEGGDSGVEHALLPEKGIVGPGDLVIGADSHTCTYGGLGAFATGVGSTDLAAAMITGEVWLKVPESIKFVYKGKLRPHVEGKDLILHTIGDIGVDGALYMAMEFTGEVIDALPMAERLTMANMAIEAGGKAGIIAPDAKTKEYADGRVIRKPVFYASDPDAKYAKVIEYDVTDLEPQVAFPHLPENTRPISQVGEVPIHQVIIGSCTNGRIEDMRSAARILTGNKADKNVRLIIIPATPQIYRQAMEEGLFDTFLSAGAVISPPTCGPCLGGHMGILAAGERAVATTNRNFVGRMGHVESEVYLANPAVAAASAIAGKIAGPDDI.

The [4Fe-4S] cluster site is built by Cys-300, Cys-360, and Cys-363.

It belongs to the aconitase/IPM isomerase family. LeuC type 2 subfamily. As to quaternary structure, heterodimer of LeuC and LeuD. [4Fe-4S] cluster serves as cofactor.

The catalysed reaction is (2R,3S)-3-isopropylmalate = (2S)-2-isopropylmalate. Its pathway is amino-acid biosynthesis; L-leucine biosynthesis; L-leucine from 3-methyl-2-oxobutanoate: step 2/4. In terms of biological role, catalyzes the isomerization between 2-isopropylmalate and 3-isopropylmalate, via the formation of 2-isopropylmaleate. The protein is 3-isopropylmalate dehydratase large subunit of Desulfatibacillum aliphaticivorans.